Here is a 1224-residue protein sequence, read N- to C-terminus: Integrin alpha pat-2 (1224 aa).

An N-terminal signal peptide occupies residues 1-27 (MREGSFPRRTRLLCLLAAVVLISTVTS). At 28–1153 (FNIDTKNVVL…ASEEGRDLPW (1126 aa)) the chain is on the extracellular side. 7 FG-GAP repeats span residues 29–96 (NIDT…TCRE), 110–173 (NGSH…KTEE), 180–235 (EPAR…TDRP), 236–292 (NTEY…MMIN), 293–347 (LTDE…KPQY), 364–423 (GKQL…GVRE), and 427–490 (QKIE…PESA). Residues Asn74, Asn110, Asn230, and Asn292 are each glycosylated (N-linked (GlcNAc...) asparagine). Residue Asn610 is glycosylated (N-linked (GlcNAc...) asparagine). The Cell attachment site motif lies at 622-624 (RGD). Residues Asn681, Asn775, and Asn819 are each glycosylated (N-linked (GlcNAc...) asparagine). Disordered regions lie at residues 898–968 (LRIT…QNTG) and 981–1037 (DYEY…KARF). Positions 920-931 (REEDDESYEDET) are enriched in acidic residues. Over residues 955 to 964 (VYERDEDKIR) the composition is skewed to basic and acidic residues. Acidic residues predominate over residues 984–1003 (YIPDDQEYDGDDFEDDDEDF). The segment covering 1008-1023 (SKRVKRAPVPKKKKKE) has biased composition (basic residues). The segment covering 1024–1037 (GSRSGEPRSDKARF) has biased composition (basic and acidic residues). The chain crosses the membrane as a helical span at residues 1154–1174 (WLYLLAILIGLAILILLILLL). The Cytoplasmic segment spans residues 1175-1224 (WRCGFFKRNRPPTEHAELRAEKQPAAHYADTQSRYAPQDQYSQGRHGQML). The segment at 1190 to 1224 (AELRAEKQPAAHYADTQSRYAPQDQYSQGRHGQML) is disordered. Residues 1204–1224 (DTQSRYAPQDQYSQGRHGQML) show a composition bias toward polar residues.

Belongs to the integrin alpha chain family. In terms of assembly, heterodimer of an alpha and a beta subunit. Alpha pat-2 associates with beta pat-3.

It localises to the membrane. Required for muscle development probably through the regulation of the actin-myosin cytoskeleton. During the formation of neuromuscular junctions at the larval stage, negatively regulates membrane protrusion from body wall muscles, probably through lamins such as epi-1, lam-2 and unc-52. Required for distal tip cell migration and dorsal pathfinding. Required for egg-laying. May play a role in cell motility and cell-cell interactions. This Caenorhabditis briggsae protein is Integrin alpha pat-2.